The chain runs to 345 residues: Transcription initiation factor IIB (345 aa).

Residues 8 to 40 (VGRNCPHCSAVDSLQTDDVMGEVACTACALVVA) form a TFIIB-type zinc finger. Zn(2+) is bound by residues Cys12, Cys15, Cys32, and Cys35. 2 disordered regions span residues 59–89 (DVDH…HMSS) and 318–345 (PTAG…REET). The segment covering 71-83 (TAATSAAGSLSAA) has biased composition (low complexity).

It belongs to the TFIIB family. As to quaternary structure, monomer. Interacts with RNA polymerase II subunits RPB1 and RPB2. Interacts with TBP; the interaction is direct.

Its subcellular location is the nucleus. Its function is as follows. Specifically binds to the promoter of the spliced leader (SL) RNA gene and thus is essential for SLRNA transcription. The chain is Transcription initiation factor IIB from Trypanosoma brucei brucei.